The sequence spans 143 residues: Ribosome maturation factor RimP (143 aa).

The protein belongs to the RimP family.

It localises to the cytoplasm. Functionally, required for maturation of 30S ribosomal subunits. The protein is Ribosome maturation factor RimP of Borrelia recurrentis (strain A1).